Consider the following 290-residue polypeptide: MERYDELKKGESGALVSIAAYLVLSAIKLIIGYLFHSEALTADGLNNTTDIIASVAVLIGLRISQKPPDEDHPYGHFRAETIASLIASFIMMVVGLQVLFSAGESIFSAKQETPDMIAAWTAAGGAVLMLIVYRYNKRLAKKVKSQALLAAAADNKSDAFVSIGTFIGIVAAQFHLAWIDTVTAFVIGLLICKTAWDIFKESSHSLTDGFDIKDISAYKQTIEKISGVSRLKDIKARYLGSTVHVDVVVEVSADLNITESHDIANEIERRMKEEHAIDYSHVHMEPLEQK.

Helical transmembrane passes span 15–35 (LVSI…GYLF), 39–61 (ALTA…LIGL), 82–102 (IASL…LFSA), 113–133 (TPDM…LIVY), 159–179 (AFVS…LAWI), and 181–201 (TVTA…IFKE).

Belongs to the cation diffusion facilitator (CDF) transporter (TC 2.A.4) family.

It is found in the cell membrane. Functionally, secondary manganese efflux system. May prevent manganese intoxication. The polypeptide is Manganese efflux system protein MneS (Bacillus subtilis (strain 168)).